The sequence spans 235 residues: Orotidine 5'-phosphate decarboxylase (235 aa).

Residues D11, K33, 60–69 (DLKFHDIPNT), T119, R180, Q189, G209, and R210 each bind substrate. The Proton donor role is filled by K62.

Belongs to the OMP decarboxylase family. Type 1 subfamily. Homodimer.

It catalyses the reaction orotidine 5'-phosphate + H(+) = UMP + CO2. The protein operates within pyrimidine metabolism; UMP biosynthesis via de novo pathway; UMP from orotate: step 2/2. Functionally, catalyzes the decarboxylation of orotidine 5'-monophosphate (OMP) to uridine 5'-monophosphate (UMP). The protein is Orotidine 5'-phosphate decarboxylase of Alkalilimnicola ehrlichii (strain ATCC BAA-1101 / DSM 17681 / MLHE-1).